We begin with the raw amino-acid sequence, 353 residues long: MTKITNDLFLKAARKEQVDRIPVWYMRQAGRSQPEYRKLKEKYSLFEITHQPEICAYVTKLPVDQYGVDAAILYKDIMTPLPGMGVDVEIKSGIGPVIHNPIRSFQDVEKLTIFKPEIEVPYVLDTIKLLADDMLDVPLIGFAGAPFTLASYMIEGGPSKNYHQTKSFMYREPEVWAILMEKLGRMTANYLIAQINAGASAVQLFDSWVGALSRADYAEYIRPVIEMIVREVKAVHPTTPIIMQAVGASHLLEEWETMPLDVVGVDWRETITSARKKVPTKAIQGNLDPSTLLAPEKCLKEANRILQEGVLEPGYIFNLGHGVFPEVPPEMLKQLTNYIHERSEILLKKDDIK.

Substrate-binding positions include Arg-27–Arg-31, Phe-46, Asp-76, Tyr-152, Ser-207, and His-321.

The protein belongs to the uroporphyrinogen decarboxylase family. As to quaternary structure, homodimer.

It is found in the cytoplasm. The enzyme catalyses uroporphyrinogen III + 4 H(+) = coproporphyrinogen III + 4 CO2. Its pathway is porphyrin-containing compound metabolism; protoporphyrin-IX biosynthesis; coproporphyrinogen-III from 5-aminolevulinate: step 4/4. Its function is as follows. Catalyzes the decarboxylation of four acetate groups of uroporphyrinogen-III to yield coproporphyrinogen-III. This Listeria monocytogenes serovar 1/2a (strain ATCC BAA-679 / EGD-e) protein is Uroporphyrinogen decarboxylase.